We begin with the raw amino-acid sequence, 1233 residues long: Insulin receptor substrate 1 (1233 aa).

Position 3 is a phosphoserine (Ser-3). The interval 3 to 133 is mediates interaction with PHIP; that stretch reads SPPDTDGFSD…AGGGCGGSCS (131 aa). A PH domain is found at 12–115; that stretch reads DVRKVGYLRK…WYQALLQLHN (104 aa). Position 99 is a phosphoserine; by CK2 (Ser-99). One can recognise an IRS-type PTB domain in the interval 155–259; that stretch reads FKEVWQVILK…EAMRAMSDEF (105 aa). Positions 257–425 are disordered; sequence DEFRPRSKSQ…SDGGFISSDE (169 aa). Positions 264–276 are enriched in low complexity; the sequence is KSQSSSSCSNPIS. A phosphoserine; by RPS6KB1 mark is found at Ser-265 and Ser-302. Ser-307 carries the post-translational modification Phosphoserine; by IKKB, MAPK8 and RPS6KB1. Ser-318, Ser-325, Ser-340, and Ser-343 each carry phosphoserine. Basic residues predominate over residues 349-358; that stretch reads THAHRHRGSS. Low complexity-rich tracts occupy residues 378 to 399 and 407 to 419; these read SPSATSPVSLSSSSTSGHGSTS and SSASVSGSPSDGG. Ser-414 carries the post-translational modification Phosphoserine. Thr-441 and Thr-448 each carry phosphothreonine. Residue Tyr-460 is modified to Phosphotyrosine; by INSR. A YXXM motif 1 motif is present at residues 460-463; sequence YICM. Ser-522 bears the Phosphoserine; by RPS6KB1 mark. 2 consecutive short sequence motifs (YXXM motif) follow at residues 546 to 549 and 608 to 611; these read YTEM and YMPM. At Tyr-608 the chain carries Phosphotyrosine; by INSR. The residue at position 612 (Ser-612) is a Phosphoserine. Tyr-628 is modified (phosphotyrosine; by INSR). The YXXM motif 4 motif lies at 628 to 631; the sequence is YMPM. Residue Ser-632 is modified to Phosphoserine; by RPS6KB1 and ROCK2. Residues 651 to 720 form a disordered region; the sequence is QRVDPNGYMM…PPVESGGGKL (70 aa). Tyr-658 carries the post-translational modification Phosphotyrosine. A YXXM motif 5 motif is present at residues 658–661; the sequence is YMMM. Residues 662–689 show a composition bias toward low complexity; the sequence is SPSGSCSPDIGGGSSSSSSISAAPSGSS. A YXXM motif 6 motif is present at residues 727–730; that stretch reads YMNM. Positions 766–985 are disordered; the sequence is FKHTQRPGEP…VPNSRGDYMT (220 aa). Residues 771 to 780 are compositionally biased toward basic and acidic residues; it reads RPGEPEEGAR. Low complexity-rich tracts occupy residues 785–794 and 801–810; these read RLSSSSGRLR and DSSSSTSSDS. Ser-789 bears the Phosphoserine; by AMPK and SIK2 mark. A Phosphoserine modification is found at Ser-887. Residues Tyr-891, Tyr-935, and Tyr-983 each carry the phosphotyrosine; by INSR modification. Residues 891–893 are GRB2-binding; that stretch reads YVN. 3 short sequence motifs (YXXM motif) span residues 935-938, 983-986, and 1006-1009; these read YMNM, YMTM, and YADM. The disordered stretch occupies residues 1015–1137; sequence AEKASLPRPT…GSEDVKRHSS (123 aa). Positions 1032 to 1042 are enriched in low complexity; that stretch reads STASSSASVTP. Polar residues-rich tracts occupy residues 1043–1052 and 1069–1081; these read QGATAEQATH and TRVNLSPNHNQSA. Phosphoserine is present on residues Ser-1096 and Ser-1097. Positions 1116 to 1129 are enriched in gly residues; sequence AAVGGSGGGGGGGS. Residue Tyr-1173 is modified to Phosphotyrosine; by INSR. Positions 1178 to 1233 are disordered; it reads LAKEHSQDCPSQQQSLPPPPPHQPLGSNEGNSPRRSSEDLSNYASISFQKQPEDRQ. A Glycyl lysine isopeptide (Lys-Gly) (interchain with G-Cter in ubiquitin) cross-link involves residue Lys-1180. Residues 1203–1227 are compositionally biased toward polar residues; it reads GSNEGNSPRRSSEDLSNYASISFQK. A Phosphotyrosine; by INSR modification is found at Tyr-1220.

As to quaternary structure, interacts (via phosphorylated YXXM motifs) with PIK3R1. Interacts with ROCK1. Interacts with GRB2. Interacts with SOCS7. Interacts (via IRS-type PTB domain) with IGF1R and INSR (via the tyrosine-phosphorylated NPXY motif). Interacts with UBTF and PIK3CA. Interacts (via PH domain) with PHIP. Interacts with FER. Interacts with ALK. Interacts with EIF2AK2/PKR. Interacts with GKAP1. Interacts with DGKZ in the absence of insulin; insulin stimulation decreases this interaction. Found in a ternary complex with DGKZ and PIP5K1A in the absence of insulin stimulation. Interacts with SQSTM1; the interaction is disrupted by the presence of tensin TNS2. Interacts with NCK1 (via SH2 domain). Interacts with NCK2 (via SH3 domain). Interacts with SH2B1; this interaction enhances leptin-induced activation of the PI3-kinase pathway. Interacts with DVL2; this interaction promotes the Wnt/beta-catenin signaling pathway. Post-translationally, serine phosphorylation of IRS1 is a mechanism for insulin resistance. Ser-307 phosphorylation inhibits insulin action through disruption of IRS1 interaction with the insulin receptor. Phosphorylation of Tyr-891 is required for GRB2-binding. Phosphorylated by ALK. Phosphorylated at Ser-265, Ser-302, Ser-632 and Ser-1097 by RPS6KB1; phosphorylation induces accelerated degradation of IRS1. Phosphorylated on tyrosine residues in response to insulin. In skeletal muscles, dephosphorylated on Tyr-608 by TNS2 under anabolic conditions; dephosphorylation results in the proteasomal degradation of IRS1. Ubiquitinated by the Cul7-RING(FBXW8) complex in a mTOR-dependent manner, leading to its degradation: the Cul7-RING(FBXW8) complex recognizes and binds IRS1 previously phosphorylated by S6 kinase (RPS6KB1 or RPS6KB2). Ubiquitinated by TRAF4 through 'Lys-29' linkage; this ubiquitination regulates the interaction of IRS1 with IGFR and IRS1 tyrosine phosphorylation upon IGF1 stimulation. In terms of processing, S-nitrosylation at by BLVRB inhibits its activity. As to expression, expressed in osteoblasts, but not in osteoclasts.

It is found in the cytoplasm. The protein localises to the nucleus. Signaling adapter protein that participates in the signal transduction from two prominent receptor tyrosine kinases, insulin receptor/INSR and insulin-like growth factor I receptor/IGF1R. Plays therefore an important role in development, growth, glucose homeostasis as well as lipid metabolism. Upon phosphorylation by the insulin receptor, functions as a signaling scaffold that propagates insulin action through binding to SH2 domain-containing proteins including the p85 regulatory subunit of PI3K, NCK1, NCK2, GRB2 or SHP2. Recruitment of GRB2 leads to the activation of the guanine nucleotide exchange factor SOS1 which in turn triggers the Ras/Raf/MEK/MAPK signaling cascade. Activation of the PI3K/AKT pathway is responsible for most of insulin metabolic effects in the cell, and the Ras/Raf/MEK/MAPK is involved in the regulation of gene expression and in cooperation with the PI3K pathway regulates cell growth and differentiation. Acts a positive regulator of the Wnt/beta-catenin signaling pathway through suppression of DVL2 autophagy-mediated degradation leading to cell proliferation. The protein is Insulin receptor substrate 1 (Irs1) of Mus musculus (Mouse).